The following is a 618-amino-acid chain: Proline--tRNA ligase (618 aa).

Belongs to the class-II aminoacyl-tRNA synthetase family. ProS type 1 subfamily. As to quaternary structure, homodimer.

The protein localises to the cytoplasm. It carries out the reaction tRNA(Pro) + L-proline + ATP = L-prolyl-tRNA(Pro) + AMP + diphosphate. Its function is as follows. Catalyzes the attachment of proline to tRNA(Pro) in a two-step reaction: proline is first activated by ATP to form Pro-AMP and then transferred to the acceptor end of tRNA(Pro). As ProRS can inadvertently accommodate and process non-cognate amino acids such as alanine and cysteine, to avoid such errors it has two additional distinct editing activities against alanine. One activity is designated as 'pretransfer' editing and involves the tRNA(Pro)-independent hydrolysis of activated Ala-AMP. The other activity is designated 'posttransfer' editing and involves deacylation of mischarged Ala-tRNA(Pro). The misacylated Cys-tRNA(Pro) is not edited by ProRS. This Streptococcus uberis (strain ATCC BAA-854 / 0140J) protein is Proline--tRNA ligase.